The primary structure comprises 376 residues: DNA double-strand break repair protein Mre11 (376 aa).

The Mn(2+) site is built by Asp-5, His-7, Asp-46, and Asp-81. The active-site Proton donor is His-82. Residues His-159, His-189, and His-191 each coordinate Mn(2+).

This sequence belongs to the MRE11/RAD32 family. In terms of assembly, homodimer. Forms a heterotetramer composed of two Mre11 subunits and two Rad50 subunits. Mn(2+) is required as a cofactor.

With respect to regulation, nuclease activity is regulated by Rad50. Functionally, part of the Rad50/Mre11 complex, which is involved in the early steps of DNA double-strand break (DSB) repair. The complex may facilitate opening of the processed DNA ends to aid in the recruitment of HerA and NurA. Mre11 binds to DSB ends and has both double-stranded 3'-5' exonuclease activity and single-stranded endonuclease activity. This chain is DNA double-strand break repair protein Mre11, found in Thermoplasma acidophilum (strain ATCC 25905 / DSM 1728 / JCM 9062 / NBRC 15155 / AMRC-C165).